The primary structure comprises 384 residues: Deoxyguanosinetriphosphate triphosphohydrolase-like protein (384 aa).

Residues 62-198 enclose the HD domain; that stretch reads RLTHSLEVST…AALADDISYI (137 aa).

The protein belongs to the dGTPase family. Type 2 subfamily.

In Rickettsia rickettsii (strain Iowa), this protein is Deoxyguanosinetriphosphate triphosphohydrolase-like protein.